The sequence spans 336 residues: Glucokinase (336 aa).

12–17 contributes to the ATP binding site; that stretch reads ADIGGT.

Belongs to the bacterial glucokinase family.

It localises to the cytoplasm. It carries out the reaction D-glucose + ATP = D-glucose 6-phosphate + ADP + H(+). This Helicobacter acinonychis (strain Sheeba) protein is Glucokinase.